The chain runs to 188 residues: V-type proton ATPase subunit E (188 aa).

Belongs to the V-ATPase E subunit family.

In terms of biological role, produces ATP from ADP in the presence of a proton gradient across the membrane. The protein is V-type proton ATPase subunit E of Dictyoglomus thermophilum (strain ATCC 35947 / DSM 3960 / H-6-12).